Reading from the N-terminus, the 630-residue chain is PAN2-PAN3 deadenylation complex subunit PAN3 (630 aa).

Residues 7-36 (SAKDTLCKNILIYGYCKFENKGCAFSHHKP) form a C3H1-type zinc finger. 2 disordered regions span residues 38 to 72 (VGQP…PSFQ) and 135 to 171 (GFGS…QSSG). Positions 44–56 (SASSSSGYSGNSS) are enriched in low complexity. Residues 140–149 (YPSSPNTSGA) show a composition bias toward polar residues. The tract at residues 231 to 501 (QTLPRSNLPE…LDRFSQRYLT (271 aa)) is pseudokinase domain. ATP contacts are provided by residues arginine 283, 333–340 (DYFPNSST), and 388–389 (TK). The stretch at 502–540 (TRLFSTINNLEDSTDFMESQITTELENARLFRLLTKLNF) forms a coiled coil. The segment at 541–630 (IIDRPEAKDW…DSVFRNLTRD (90 aa)) is knob domain.

The protein belongs to the protein kinase superfamily. PAN3 family. As to quaternary structure, homodimer. Forms a heterotrimer with a catalytic subunit PAN2 to form the poly(A)-nuclease (PAN) deadenylation complex. Interacts (via PAM-2 motif) with poly(A)-binding protein PAB1 (via PABC domain), conferring substrate specificity of the enzyme complex.

The protein localises to the cytoplasm. Its function is as follows. Regulatory subunit of the poly(A)-nuclease (PAN) deadenylation complex, one of two cytoplasmic mRNA deadenylases involved in mRNA turnover. PAN specifically shortens poly(A) tails of RNA and the activity is stimulated by poly(A)-binding protein PAB1. PAN deadenylation is followed by rapid degradation of the shortened mRNA tails by the CCR4-NOT complex. Deadenylated mRNAs are then degraded by two alternative mechanisms, namely exosome-mediated 3'-5' exonucleolytic degradation, or deadenylation-dependent mRNA decaping and subsequent 5'-3' exonucleolytic degradation by XRN1. May also be involved in post-transcriptional maturation of mRNA poly(A) tails. PAN3 acts as a positive regulator for PAN activity, recruiting the catalytic subunit PAN2 to mRNA via its interaction with RNA and with PAB1. The sequence is that of PAN2-PAN3 deadenylation complex subunit PAN3 from Scheffersomyces stipitis (strain ATCC 58785 / CBS 6054 / NBRC 10063 / NRRL Y-11545) (Yeast).